The following is a 22-amino-acid chain: Zinc finger protein 326 (22 aa).

The disordered stretch occupies residues 1–22 (QGYGFNEPEQTRNQGGSSWEAP). Polar residues predominate over residues 11–22 (TRNQGGSSWEAP).

The protein belongs to the AKAP95 family.

The protein resides in the nucleus matrix. Functionally, probable transcriptional activator which may play a role in neuronal differentiation. Able to bind DNA and activate expression in vitro. The chain is Zinc finger protein 326 (Znf326) from Rattus norvegicus (Rat).